Reading from the N-terminus, the 264-residue chain is Thymidylate synthase (264 aa).

R21 is a binding site for dUMP. H51 lines the (6R)-5,10-methylene-5,6,7,8-tetrahydrofolate pocket. 126-127 serves as a coordination point for dUMP; that stretch reads RR. Catalysis depends on C146, which acts as the Nucleophile. DUMP-binding positions include 166 to 169, N177, and 207 to 209; these read RSCD and HLY. D169 is a binding site for (6R)-5,10-methylene-5,6,7,8-tetrahydrofolate. (6R)-5,10-methylene-5,6,7,8-tetrahydrofolate is bound at residue A263.

It belongs to the thymidylate synthase family. Bacterial-type ThyA subfamily. As to quaternary structure, homodimer.

Its subcellular location is the cytoplasm. It carries out the reaction dUMP + (6R)-5,10-methylene-5,6,7,8-tetrahydrofolate = 7,8-dihydrofolate + dTMP. Its pathway is pyrimidine metabolism; dTTP biosynthesis. Catalyzes the reductive methylation of 2'-deoxyuridine-5'-monophosphate (dUMP) to 2'-deoxythymidine-5'-monophosphate (dTMP) while utilizing 5,10-methylenetetrahydrofolate (mTHF) as the methyl donor and reductant in the reaction, yielding dihydrofolate (DHF) as a by-product. This enzymatic reaction provides an intracellular de novo source of dTMP, an essential precursor for DNA biosynthesis. The polypeptide is Thymidylate synthase (Yersinia pestis bv. Antiqua (strain Antiqua)).